The sequence spans 558 residues: Formate--tetrahydrofolate ligase (558 aa).

An ATP-binding site is contributed by 66 to 73 (TPAGEGKT).

It belongs to the formate--tetrahydrofolate ligase family.

The catalysed reaction is (6S)-5,6,7,8-tetrahydrofolate + formate + ATP = (6R)-10-formyltetrahydrofolate + ADP + phosphate. It participates in one-carbon metabolism; tetrahydrofolate interconversion. The protein is Formate--tetrahydrofolate ligase of Neisseria meningitidis serogroup C / serotype 2a (strain ATCC 700532 / DSM 15464 / FAM18).